An 88-amino-acid polypeptide reads, in one-letter code: Small ribosomal subunit protein bS16 (88 aa).

This sequence belongs to the bacterial ribosomal protein bS16 family.

The chain is Small ribosomal subunit protein bS16 from Syntrophomonas wolfei subsp. wolfei (strain DSM 2245B / Goettingen).